Consider the following 437-residue polypeptide: GTPase Der (437 aa).

EngA-type G domains follow at residues 3–168 (PLIA…PESE) and 178–353 (VKLA…RNRS). Residues 9–16 (GRPNVGKS), 56–60 (DTGGY), 120–123 (NKVE), 184–191 (GRPNVGKS), 231–235 (DTAGL), and 296–299 (NKWD) each bind GTP. Residues 354–437 (RKISTSSLNR…VPISLRFMEK (84 aa)) form the KH-like domain.

The protein belongs to the TRAFAC class TrmE-Era-EngA-EngB-Septin-like GTPase superfamily. EngA (Der) GTPase family. Associates with the 50S ribosomal subunit.

GTPase that plays an essential role in the late steps of ribosome biogenesis. The polypeptide is GTPase Der (Chlorobium limicola (strain DSM 245 / NBRC 103803 / 6330)).